We begin with the raw amino-acid sequence, 199 residues long: MKRTRAGFTLLEMLVAIAIFASLALMAQQVTNGVTRVNSAVADHDQKLNLMQQTMSFLTHDLTQMMPRPVRGDQGQREPALLAGAGVLASESEGMRFVRGGVVNPLMRLPRSNLLTVGYRIHDGYLERLAWPLTDAAGSVKPTMQKLIPADSLRLQFYDGTRWQESWSSVQAIPVAVRMTLHSPQWGEIERIWLLRGPQ.

Residues 1–7 (MKRTRAG) constitute a propeptide, leader sequence. The residue at position 8 (Phe8) is an N-methylphenylalanine. A helical membrane pass occupies residues 8 to 27 (FTLLEMLVAIAIFASLALMA).

Belongs to the GSP J family. As to quaternary structure, type II secretion is composed of four main components: the outer membrane complex, the inner membrane complex, the cytoplasmic secretion ATPase and the periplasm-spanning pseudopilus. Interacts with core component GspG. Interacts with pseudopilins GspI and GspK. Cleaved by prepilin peptidase. Post-translationally, methylated by prepilin peptidase at the amino group of the N-terminal phenylalanine once the leader sequence is cleaved by prepilin peptidase.

It is found in the cell inner membrane. In terms of biological role, component of the type II secretion system required for the energy-dependent secretion of extracellular factors such as proteases and toxins from the periplasm. Part of the pseudopilus tip complex that is critical for the recognition and binding of secretion substrates. The polypeptide is Type II secretion system protein J (gspJ) (Escherichia coli).